Consider the following 240-residue polypeptide: 6-carboxyhexanoate--CoA ligase (240 aa).

It belongs to the BioW family. As to quaternary structure, homodimer. It depends on Mg(2+) as a cofactor.

The catalysed reaction is heptanedioate + ATP + CoA = 6-carboxyhexanoyl-CoA + AMP + diphosphate. It functions in the pathway metabolic intermediate metabolism; pimeloyl-CoA biosynthesis; pimeloyl-CoA from pimelate: step 1/1. Catalyzes the transformation of pimelate into pimeloyl-CoA with concomitant hydrolysis of ATP to AMP. This chain is 6-carboxyhexanoate--CoA ligase, found in Aquifex aeolicus (strain VF5).